Reading from the N-terminus, the 304-residue chain is Cell surface-binding protein OPG105 (304 aa).

One can recognise an Alpha-carbonic anhydrase domain in the interval 1 to 235 (MPQQLSPINI…NDDTQVYYSG (235 aa)). Topologically, residues 1-275 (MPQQLSPINI…YQKYIEGNKT (275 aa)) are virion surface. A helical transmembrane segment spans residues 276 to 294 (FAIIAIVFVFILTAILFLM). Over 295–304 (SRRYSREKQN) the chain is Intravirion.

The protein belongs to the alpha-carbonic anhydrase family. In terms of assembly, homodimer; disulfide-linked. Post-translationally, apparently non-glycosylated.

It is found in the virion membrane. In terms of biological role, binds to chondroitin sulfate on the cell surface to provide virion attachment to target cell. This is Cell surface-binding protein OPG105 (OPG105) from Vaccinia virus (strain Copenhagen) (VACV).